The following is a 632-amino-acid chain: Phosphomethylpyrimidine synthase (632 aa).

Residues asparagine 237, methionine 266, tyrosine 295, histidine 331, 351-353, 392-395, and glutamate 431 contribute to the substrate site; these read SRG and DGLR. Position 435 (histidine 435) interacts with Zn(2+). Substrate is bound at residue tyrosine 458. Histidine 499 is a binding site for Zn(2+). Cysteine 579, cysteine 582, and cysteine 587 together coordinate [4Fe-4S] cluster.

It belongs to the ThiC family. Homodimer. It depends on [4Fe-4S] cluster as a cofactor.

The enzyme catalyses 5-amino-1-(5-phospho-beta-D-ribosyl)imidazole + S-adenosyl-L-methionine = 4-amino-2-methyl-5-(phosphooxymethyl)pyrimidine + CO + 5'-deoxyadenosine + formate + L-methionine + 3 H(+). Its pathway is cofactor biosynthesis; thiamine diphosphate biosynthesis. Catalyzes the synthesis of the hydroxymethylpyrimidine phosphate (HMP-P) moiety of thiamine from aminoimidazole ribotide (AIR) in a radical S-adenosyl-L-methionine (SAM)-dependent reaction. The chain is Phosphomethylpyrimidine synthase from Nitrosomonas eutropha (strain DSM 101675 / C91 / Nm57).